Consider the following 178-residue polypeptide: Bifunctional protein PyrR (178 aa).

The PRPP-binding motif lies at 99 to 111 (VVLVDDVIYTGRT).

This sequence belongs to the purine/pyrimidine phosphoribosyltransferase family. PyrR subfamily. In terms of assembly, homodimer and homohexamer; in equilibrium.

The enzyme catalyses UMP + diphosphate = 5-phospho-alpha-D-ribose 1-diphosphate + uracil. In terms of biological role, regulates transcriptional attenuation of the pyrimidine nucleotide (pyr) operon by binding in a uridine-dependent manner to specific sites on pyr mRNA. This disrupts an antiterminator hairpin in the RNA and favors formation of a downstream transcription terminator, leading to a reduced expression of downstream genes. Also displays a weak uracil phosphoribosyltransferase activity which is not physiologically significant. In Thermoanaerobacter pseudethanolicus (strain ATCC 33223 / 39E) (Clostridium thermohydrosulfuricum), this protein is Bifunctional protein PyrR.